Here is a 120-residue protein sequence, read N- to C-terminus: C-C motif chemokine 2 (120 aa).

Residues 1-23 (MQRSSVLLCLLVIEATFCSLLMA) form the signal peptide. Pyrrolidone carboxylic acid is present on Q24. 2 disulfide bridges follow: C33–C57 and C34–C73. Residues 91 to 120 (RTQQKQNSTAPQTSKPLNIRFTTQDPKNRS) are disordered. Polar residues predominate over residues 93–120 (QQKQNSTAPQTSKPLNIRFTTQDPKNRS). An N-linked (GlcNAc...) asparagine glycan is attached at N97.

It belongs to the intercrine beta (chemokine CC) family. As to quaternary structure, monomer or homodimer; in equilibrium. Is tethered on endothelial cells by glycosaminoglycan (GAG) side chains of proteoglycans. Interacts with TNFAIP6 (via Link domain). Processing at the N-terminus can regulate receptor and target cell selectivity. Deletion of the N-terminal residue converts it from an activator of basophil to an eosinophil chemoattractant. Post-translationally, N-Glycosylated.

Its subcellular location is the secreted. Functionally, acts as a ligand for C-C chemokine receptor CCR2. Signals through binding and activation of CCR2 and induces a strong chemotactic response and mobilization of intracellular calcium ions. Exhibits a chemotactic activity for monocytes and basophils but not neutrophils or eosinophils. Plays an important role in mediating peripheral nerve injury-induced neuropathic pain. Increases NMDA-mediated synaptic transmission in both dopamine D1 and D2 receptor-containing neurons, which may be caused by MAPK/ERK-dependent phosphorylation of GRIN2B/NMDAR2B. In Cavia porcellus (Guinea pig), this protein is C-C motif chemokine 2 (CCL2).